The sequence spans 409 residues: Tyrosine--tRNA ligase (409 aa).

The 'HIGH' region motif lies at 54–63; it reads PTAPDIHLGH. The 'KMSKS' region motif lies at 238–242; it reads KMSKS. ATP is bound at residue lysine 241. The region spanning 347–407 is the S4 RNA-binding domain; sequence QGILRILREA…GKRKFARVKL (61 aa).

It belongs to the class-I aminoacyl-tRNA synthetase family. TyrS type 2 subfamily. In terms of assembly, homodimer.

The protein localises to the cytoplasm. It catalyses the reaction tRNA(Tyr) + L-tyrosine + ATP = L-tyrosyl-tRNA(Tyr) + AMP + diphosphate + H(+). Its function is as follows. Catalyzes the attachment of tyrosine to tRNA(Tyr) in a two-step reaction: tyrosine is first activated by ATP to form Tyr-AMP and then transferred to the acceptor end of tRNA(Tyr). The chain is Tyrosine--tRNA ligase from Bordetella bronchiseptica (strain ATCC BAA-588 / NCTC 13252 / RB50) (Alcaligenes bronchisepticus).